The sequence spans 422 residues: Inhibitory synaptic factor 2A (422 aa).

Positions 143–163 (FLADSKEKSEAGPMEEPRPCS) are disordered. The segment covering 146–160 (DSKEKSEAGPMEEPR) has biased composition (basic and acidic residues). Ser177 is modified (phosphoserine). Residues 344-370 (TEVVDLKAQLQVMENLISSSQETIKVL) are a coiled coil.

The protein belongs to the INSYN2 family. In terms of assembly, interacts with GPHN.

The protein localises to the postsynaptic density. Its function is as follows. Component of the protein machinery at the inhibitory synapses, probably acting as a scaffold. Inhibitory synapses dampen neuronal activity through postsynaptic hyperpolarization. This synaptic inhibition is fundamental for the functioning of the central nervous system, shaping and orchestrating the flow of information through neuronal networks to generate a precise neural code. The protein is Inhibitory synaptic factor 2A of Mus musculus (Mouse).